The chain runs to 109 residues: RNA-binding protein Hfq (109 aa).

Positions 9–68 constitute a Sm domain; sequence DPFLNALRKEKVSVSVYLVNGIKLQGQVEAFDQFCIVLRNTVNQMVYKHAISTIVPAKSV.

The protein belongs to the Hfq family. Homohexamer.

RNA chaperone that binds small regulatory RNA (sRNAs) and mRNAs to facilitate mRNA translational regulation in response to envelope stress, environmental stress and changes in metabolite concentrations. Also binds with high specificity to tRNAs. The protein is RNA-binding protein Hfq of Francisella philomiragia subsp. philomiragia (strain ATCC 25017 / CCUG 19701 / FSC 153 / O#319-036).